The sequence spans 382 residues: Anhydro-N-acetylmuramic acid kinase (382 aa).

Residue 9–16 participates in ATP binding; the sequence is GTSLDGID.

The protein belongs to the anhydro-N-acetylmuramic acid kinase family.

It catalyses the reaction 1,6-anhydro-N-acetyl-beta-muramate + ATP + H2O = N-acetyl-D-muramate 6-phosphate + ADP + H(+). The protein operates within amino-sugar metabolism; 1,6-anhydro-N-acetylmuramate degradation. Its pathway is cell wall biogenesis; peptidoglycan recycling. Functionally, catalyzes the specific phosphorylation of 1,6-anhydro-N-acetylmuramic acid (anhMurNAc) with the simultaneous cleavage of the 1,6-anhydro ring, generating MurNAc-6-P. Is required for the utilization of anhMurNAc either imported from the medium or derived from its own cell wall murein, and thus plays a role in cell wall recycling. The sequence is that of Anhydro-N-acetylmuramic acid kinase from Bacillus cereus (strain G9842).